Reading from the N-terminus, the 506-residue chain is UDP-N-acetylglucosamine--peptide N-acetylglucosaminyltransferase GtfA subunit (506 aa).

16-19 (GVEY) contributes to the UDP binding site. Position 241 (His-241) interacts with N-acetyl-D-glucosamine. 384-385 (HK) contributes to the UDP binding site. Residue 404 to 407 (EGFG) participates in N-acetyl-D-glucosamine binding.

Belongs to the glycosyltransferase group 1 family. Glycosyltransferase 4 subfamily. As to quaternary structure, interacts with stabilizing protein GtfB (Gtf2), probably as a heterotetramer with 2 subunits each of GtfA and GtfB, part of the accessory SecA2/SecY2 protein translocation apparatus.

The protein localises to the cytoplasm. It is found in the cell membrane. It carries out the reaction L-seryl-[protein] + UDP-N-acetyl-alpha-D-glucosamine = 3-O-[N-acetyl-alpha-D-glucosaminyl]-L-seryl-[protein] + UDP + H(+). The protein operates within protein modification; protein glycosylation. Functionally, required for polymorphic O-glycosylation of the serine-rich repeat protein Srr2. Catalyzes the first step in glycosylation by transferring N-acetylglucosamine from UDP-GlcNAc to serine residues of Srr2. Part of the accessory SecA2/SecY2 system specifically required to export serine-rich repeat proteins, probably Srr2 in this organism. The GtfA-GtfB (Gtf1-Gtf2 in this bacteria) complex adds GlcNAc from UDP-GlcNAc to Srr2 substrate. This subunit has low glycosyltransferase activity; GtfB enhances glycosyltransferase activity in vitro. Upon expression in S.parasanguis GtfA/GtfB restores expression of serine-rich repeat protein Fap1 and complements a biofilm formation defect. This Streptococcus agalactiae protein is UDP-N-acetylglucosamine--peptide N-acetylglucosaminyltransferase GtfA subunit.